An 878-amino-acid chain; its full sequence is Leucine--tRNA ligase (878 aa).

The short motif at 56–66 (PYPSGKLHMGH) is the 'HIGH' region element. The 'KMSKS' region signature appears at 630 to 634 (KMSKS). Lysine 633 serves as a coordination point for ATP.

This sequence belongs to the class-I aminoacyl-tRNA synthetase family.

The protein localises to the cytoplasm. It carries out the reaction tRNA(Leu) + L-leucine + ATP = L-leucyl-tRNA(Leu) + AMP + diphosphate. In Prochlorococcus marinus (strain MIT 9313), this protein is Leucine--tRNA ligase.